Here is a 336-residue protein sequence, read N- to C-terminus: Anthranilate phosphoribosyltransferase (336 aa).

5-phospho-alpha-D-ribose 1-diphosphate contacts are provided by residues Gly-82, 85–86 (GD), Thr-90, 92–95 (NIST), 110–118 (KHGNRSVSS), and Ser-122. Gly-82 provides a ligand contact to anthranilate. Mg(2+) is bound at residue Ser-94. Asn-113 contacts anthranilate. An anthranilate-binding site is contributed by Arg-168. Residues Asp-227 and Glu-228 each contribute to the Mg(2+) site.

The protein belongs to the anthranilate phosphoribosyltransferase family. In terms of assembly, homodimer. Mg(2+) is required as a cofactor.

The enzyme catalyses N-(5-phospho-beta-D-ribosyl)anthranilate + diphosphate = 5-phospho-alpha-D-ribose 1-diphosphate + anthranilate. The protein operates within amino-acid biosynthesis; L-tryptophan biosynthesis; L-tryptophan from chorismate: step 2/5. Catalyzes the transfer of the phosphoribosyl group of 5-phosphorylribose-1-pyrophosphate (PRPP) to anthranilate to yield N-(5'-phosphoribosyl)-anthranilate (PRA). In Leptospira interrogans serogroup Icterohaemorrhagiae serovar Lai (strain 56601), this protein is Anthranilate phosphoribosyltransferase.